Consider the following 181-residue polypeptide: Ribonuclease HII (181 aa).

Positions 1 to 181 constitute an RNase H type-2 domain; it reads MICGIDEVGR…NLHRRSFKFI (181 aa). Positions 6, 7, and 98 each coordinate a divalent metal cation.

Belongs to the RNase HII family. The cofactor is Mn(2+). Mg(2+) is required as a cofactor.

The protein localises to the cytoplasm. It carries out the reaction Endonucleolytic cleavage to 5'-phosphomonoester.. Its function is as follows. Endonuclease that specifically degrades the RNA of RNA-DNA hybrids. In Borrelia hermsii (strain HS1 / DAH), this protein is Ribonuclease HII.